We begin with the raw amino-acid sequence, 688 residues long: T-box transcription factor TBX2-A (688 aa).

Positions 104-277 form a DNA-binding region, T-box; that stretch reads LWDQFHKIGT…NNPFAKGFRD (174 aa). Disordered regions lie at residues 301–436 and 606–688; these read CKAD…GSLS and PSTN…ETPK. Basic and acidic residues-rich tracts occupy residues 340-361, 378-403, and 412-430; these read NNREEKFGADSDQELDRREIRS, RLEDRGKDKSTPEKKSDSPESRKDGS, and SLEKDKAESRRKEDSKSDP. Low complexity predominate over residues 621 to 636; that stretch reads PGSESSKPGSSRESSP. Positions 655–679 form a coiled coil; sequence ASMKDSINELQNIQRLVSGLESQRE. A compositionally biased stretch (basic and acidic residues) spans 676 to 688; it reads SQREISPGRETPK.

As to quaternary structure, binds DNA as a monomer.

The protein resides in the nucleus. Functionally, transcription factor which acts as a transcriptional repressor. May also function as a transcriptional activator. Binds to the palindromic T site 5'-TTCACACCTAGGTGTGAA-3' DNA sequence, or a half-site, which are present in the regulatory region of several genes. In Xenopus laevis (African clawed frog), this protein is T-box transcription factor TBX2-A (tbx2-a).